The following is a 55-amino-acid chain: ATP synthase F(0) complex subunit 8 (55 aa).

The helical transmembrane segment at 8 to 24 threads the bilayer; that stretch reads PWFSIMVMTWLTLALLI. The segment at 35-55 is disordered; sequence NPPSKKPSLITKPTPWAWPWT.

Belongs to the ATPase protein 8 family. As to quaternary structure, component of the ATP synthase complex composed at least of ATP5F1A/subunit alpha, ATP5F1B/subunit beta, ATP5MC1/subunit c (homooctomer), MT-ATP6/subunit a, MT-ATP8/subunit 8, ATP5ME/subunit e, ATP5MF/subunit f, ATP5MG/subunit g, ATP5MK/subunit k, ATP5MJ/subunit j, ATP5F1C/subunit gamma, ATP5F1D/subunit delta, ATP5F1E/subunit epsilon, ATP5PF/subunit F6, ATP5PB/subunit b, ATP5PD/subunit d, ATP5PO/subunit OSCP. ATP synthase complex consists of a soluble F(1) head domain (subunits alpha(3) and beta(3)) - the catalytic core - and a membrane F(0) domain - the membrane proton channel (subunits c, a, 8, e, f, g, k and j). These two domains are linked by a central stalk (subunits gamma, delta, and epsilon) rotating inside the F1 region and a stationary peripheral stalk (subunits F6, b, d, and OSCP).

The protein localises to the mitochondrion membrane. Functionally, subunit 8, of the mitochondrial membrane ATP synthase complex (F(1)F(0) ATP synthase or Complex V) that produces ATP from ADP in the presence of a proton gradient across the membrane which is generated by electron transport complexes of the respiratory chain. ATP synthase complex consist of a soluble F(1) head domain - the catalytic core - and a membrane F(1) domain - the membrane proton channel. These two domains are linked by a central stalk rotating inside the F(1) region and a stationary peripheral stalk. During catalysis, ATP synthesis in the catalytic domain of F(1) is coupled via a rotary mechanism of the central stalk subunits to proton translocation. In vivo, can only synthesize ATP although its ATP hydrolase activity can be activated artificially in vitro. Part of the complex F(0) domain. The protein is ATP synthase F(0) complex subunit 8 of Anas platyrhynchos (Mallard).